Consider the following 57-residue polypeptide: Small ribosomal subunit protein bS21 (57 aa).

This sequence belongs to the bacterial ribosomal protein bS21 family.

The polypeptide is Small ribosomal subunit protein bS21 (Bacillus pumilus (strain SAFR-032)).